Consider the following 89-residue polypeptide: Small ribosomal subunit protein uS15 (89 aa).

The protein belongs to the universal ribosomal protein uS15 family. Part of the 30S ribosomal subunit. Forms a bridge to the 50S subunit in the 70S ribosome, contacting the 23S rRNA.

Its function is as follows. One of the primary rRNA binding proteins, it binds directly to 16S rRNA where it helps nucleate assembly of the platform of the 30S subunit by binding and bridging several RNA helices of the 16S rRNA. Forms an intersubunit bridge (bridge B4) with the 23S rRNA of the 50S subunit in the ribosome. The protein is Small ribosomal subunit protein uS15 of Nitratidesulfovibrio vulgaris (strain DSM 19637 / Miyazaki F) (Desulfovibrio vulgaris).